The following is a 142-amino-acid chain: Large ribosomal subunit protein uL11 (142 aa).

The protein belongs to the universal ribosomal protein uL11 family. Part of the ribosomal stalk of the 50S ribosomal subunit. Interacts with L10 and the large rRNA to form the base of the stalk. L10 forms an elongated spine to which L12 dimers bind in a sequential fashion forming a multimeric L10(L12)X complex. One or more lysine residues are methylated.

In terms of biological role, forms part of the ribosomal stalk which helps the ribosome interact with GTP-bound translation factors. The polypeptide is Large ribosomal subunit protein uL11 (Mycoplasma mycoides subsp. mycoides SC (strain CCUG 32753 / NCTC 10114 / PG1)).